The chain runs to 353 residues: ATP-dependent kinase YFH7 (353 aa).

31–39 (GSPGSGKST) provides a ligand contact to ATP.

It belongs to the YFH7 family.

In terms of biological role, ATP-dependent kinase that could be involved in endoplasmic reticulum membrane assembly. This chain is ATP-dependent kinase YFH7 (YFH7), found in Saccharomyces cerevisiae (strain JAY291) (Baker's yeast).